Reading from the N-terminus, the 231-residue chain is MKFNFITLFPDKIQSYFSEGLQQKAIESGVFSVNIIQLRNFSGNKHNRVDDTIYGGGPGMLLRVEPIHKAILSLGEEKGIVILTSPSGIPFNQSIAMDLKKGGKPLTFISGYYEGVDHRVTEHLVDMEMSLGNYVLSAGDLASICIADAVSRLLPGFLGADESLLDESHNHPDILEYPQFTKPSEYNGWKVPDVLLSGNHASILAWREQNRKKIERGNYESTFKRSADSGC.

S-adenosyl-L-methionine-binding positions include Gly-111 and 131-136 (LGNYVL).

This sequence belongs to the RNA methyltransferase TrmD family. As to quaternary structure, homodimer.

It localises to the cytoplasm. The enzyme catalyses guanosine(37) in tRNA + S-adenosyl-L-methionine = N(1)-methylguanosine(37) in tRNA + S-adenosyl-L-homocysteine + H(+). In terms of biological role, specifically methylates guanosine-37 in various tRNAs. This is tRNA (guanine-N(1)-)-methyltransferase from Leptospira interrogans serogroup Icterohaemorrhagiae serovar copenhageni (strain Fiocruz L1-130).